A 37-amino-acid chain; its full sequence is Cytochrome b6-f complex subunit 7 (37 aa).

The helical transmembrane segment at 11 to 29 (AVLLMVLVLVGLAWGFLLL) threads the bilayer.

It belongs to the PetM family. As to quaternary structure, the 4 large subunits of the cytochrome b6-f complex are cytochrome b6, subunit IV (17 kDa polypeptide, PetD), cytochrome f and the Rieske protein, while the 4 small subunits are PetG, PetL, PetM and PetN. The complex functions as a dimer.

It is found in the cellular thylakoid membrane. Its function is as follows. Component of the cytochrome b6-f complex, which mediates electron transfer between photosystem II (PSII) and photosystem I (PSI), cyclic electron flow around PSI, and state transitions. This chain is Cytochrome b6-f complex subunit 7, found in Rippkaea orientalis (strain PCC 8801 / RF-1) (Cyanothece sp. (strain PCC 8801)).